Reading from the N-terminus, the 285-residue chain is MSNKERTEPQWVTPSSNQDVPPDYETIGTIFGYALQALSWILIIVTFPFSMCVCLKVIKEYERVVIFRIGRLVFGGARGPGMIFIIPCIDTYRKIDLRVVSYAVPPQEILSKDSVTVSVDAVVYFRTSDPIASVNNVDDAIYSTKLLAQTTLRNALGMKTLTEMLTEREAIAQLCETILDEGTEHWGVKVERVEVKDIRLPQQLTRAMAAEAEAAREARAKVVAAEGEQKASRALKEAADVIQANPVALQLRHLQALNSIAAEHNSTIVFPVPVEMFGAFMKKDQ.

Helical transmembrane passes span 27–47 (IGTIFGYALQALSWILIIVTF) and 69–89 (IGRLVFGGARGPGMIFIIPCI).

The protein belongs to the band 7/mec-2 family.

The protein resides in the cell membrane. It is found in the cell junction. The protein localises to the gap junction. This Caenorhabditis elegans protein is Protein unc-1 (unc-1).